Reading from the N-terminus, the 278-residue chain is HTH-type transcriptional activator RhaS (278 aa).

In terms of domain architecture, HTH araC/xylS-type spans 174-272 (NLLLAWLEDH…NWSPRDIRQG (99 aa)). 2 DNA-binding regions (H-T-H motif) span residues 191–212 (DAVA…KQQT) and 239–262 (VTDI…RREF).

Binds DNA as a dimer.

It is found in the cytoplasm. In terms of biological role, activates expression of the rhaBAD and rhaT operons. This Shigella boydii serotype 4 (strain Sb227) protein is HTH-type transcriptional activator RhaS.